The following is a 358-amino-acid chain: Heme A synthase 1 (358 aa).

Helical transmembrane passes span 11–31, 98–117, 123–143, 159–179, and 199–219; these read LVGTWLLVICFMIFGMVVGGG, WGRLMAVVFLVPLAVFRLRG, LTAWLLFLFGLGAGEATMGWY, LYLGPHFVLAMLIFTAMLWTA, and LLSVSIGLIIATIGLGALVAA. His-262 lines the heme pocket. Transmembrane regions (helical) follow at residues 264–284, 292–312, and 315–335; these read VAATVTAIVVVIAAAMGLRAP, LFLLLAGLVSLQYILGMSTLV, and MAELGYVHELNAVLLLAACIA. Residue His-322 coordinates heme.

Belongs to the COX15/CtaA family. Type 2 subfamily. In terms of assembly, interacts with CtaB. It depends on heme b as a cofactor.

It localises to the cell membrane. The catalysed reaction is Fe(II)-heme o + 2 A + H2O = Fe(II)-heme a + 2 AH2. The protein operates within porphyrin-containing compound metabolism; heme A biosynthesis; heme A from heme O: step 1/1. Functionally, catalyzes the conversion of heme O to heme A by two successive hydroxylations of the methyl group at C8. The first hydroxylation forms heme I, the second hydroxylation results in an unstable dihydroxymethyl group, which spontaneously dehydrates, resulting in the formyl group of heme A. The polypeptide is Heme A synthase 1 (Acidiphilium cryptum (strain JF-5)).